Reading from the N-terminus, the 751-residue chain is Pyridoxal-dependent decarboxylase domain-containing protein 1 (751 aa).

The disordered stretch occupies residues 659 to 751; that stretch reads QMRKEDSPDS…QEAESVETIR (93 aa). The span at 690–702 shows a compositional bias: polar residues; that stretch reads DSISETSSVSQLE. Over residues 720–729 the composition is skewed to basic and acidic residues; that stretch reads PQERPAHILE. Positions 742 to 751 are enriched in acidic residues; that stretch reads QEAESVETIR.

The protein belongs to the group II decarboxylase family. Pyridoxal 5'-phosphate is required as a cofactor.

This is Pyridoxal-dependent decarboxylase domain-containing protein 1 (pdxdc1) from Danio rerio (Zebrafish).